We begin with the raw amino-acid sequence, 563 residues long: Inorganic phosphate transporter PT2 (563 aa).

Disordered regions lie at residues 1–51 (MAPR…SGEE) and 67–96 (DGGA…PAYS). Residues 1 to 127 (MAPRYHSAAE…NGEKQSLLVP (127 aa)) lie on the Extracellular side of the membrane. The helical transmembrane segment at 128–148 (CLAVFSSNYNFTVTSIALFLM) threads the bilayer. Residues 149 to 168 (NQDPLYKDASDTVVGSSTVK) are Cytoplasmic-facing. A helical membrane pass occupies residues 169-189 (MLSYAGAIVGMCTMGYLGDLI). Residues 190-192 (GRR) are Extracellular-facing. Residues 193–213 (LAMILTLALVFIGALLSSICA) traverse the membrane as a helical segment. Topologically, residues 214–217 (WGDG) are cytoplasmic. The chain crosses the membrane as a helical span at residues 218–238 (VTVLVIMGVCRFVLGVGSGGV). Residues 239–263 (YPLSAVSAAEGAGSEKSNDRSMRVS) are Extracellular-facing. Residues 264–284 (WAYSMNVPGIMFPYIVALVLW) form a helical membrane-spanning segment. Over 285–291 (CTTHNVD) the chain is Cytoplasmic. Residues 292–312 (VCFRILLGFGALPALLIWLPA) traverse the membrane as a helical segment. Over 313-342 (WRMKEDRAYVAKDFAKHLAGVFVSRSYWRQ) the chain is Extracellular. The helical transmembrane segment at 343-363 (LLGTGVCWLLYDVTAYGILLV) threads the bilayer. Residues 364-380 (QPEITQSIWGNSSSVTD) are Cytoplasmic-facing. Residues 381–401 (VIWQNIILNGMGIPGCFMGIL) traverse the membrane as a helical segment. Residues 402 to 412 (VLKQMGVKWLQ) lie on the Extracellular side of the membrane. The helical transmembrane segment at 413 to 433 (FWGFVGLAVSAFLMAATVEIL) threads the bilayer. The Cytoplasmic segment spans residues 434-440 (QGKAWAQ). The helical transmembrane segment at 441–461 (LVLLCIVNFFINWGASITTFI) threads the bilayer. At 462–477 (LPSLVFPPEVRSTYSG) the chain is on the extracellular side. The chain crosses the membrane as a helical span at residues 478–498 (ISAALGKIGAVGGIYTMKAIL). Over 499 to 504 (STGGLT) the chain is Cytoplasmic. A helical transmembrane segment spans residues 505–525 (PMMICAGVPSLAAAILTWFYV). Residues 526 to 563 (DPVPNTLRSSFLQCFGSLAGSCPFIDCRKFRRGSRAFE) lie on the Extracellular side of the membrane.

Belongs to the major facilitator superfamily. Phosphate:H(+) symporter (TC 2.A.1.9) family.

It is found in the cell membrane. The catalysed reaction is phosphate(in) = phosphate(out). Functionally, inorganic phosphate transporter. Activity is likely sodium-independent. Exhibits higher activity under acidic pH, implying that either the monovalent form of phosphate is the preferred substrate or the transport activity is H(+)-dependent. The protein is Inorganic phosphate transporter PT2 of Toxoplasma gondii (strain ATCC 50861 / VEG).